Reading from the N-terminus, the 81-residue chain is RNA-binding protein Hfq (81 aa).

A Sm domain is found at 10 to 70 (DLFLNSVRKS…ISTIMPSQPV (61 aa)).

The protein belongs to the Hfq family. In terms of assembly, homohexamer.

RNA chaperone that binds small regulatory RNA (sRNAs) and mRNAs to facilitate mRNA translational regulation in response to envelope stress, environmental stress and changes in metabolite concentrations. Also binds with high specificity to tRNAs. In Mesorhizobium japonicum (strain LMG 29417 / CECT 9101 / MAFF 303099) (Mesorhizobium loti (strain MAFF 303099)), this protein is RNA-binding protein Hfq.